Reading from the N-terminus, the 207-residue chain is Large ribosomal subunit protein uL4 (207 aa).

A disordered region spans residues 52-77 (RGWADVSGGGRKPWRQKGTGRARAGS).

Belongs to the universal ribosomal protein uL4 family. As to quaternary structure, part of the 50S ribosomal subunit.

In terms of biological role, one of the primary rRNA binding proteins, this protein initially binds near the 5'-end of the 23S rRNA. It is important during the early stages of 50S assembly. It makes multiple contacts with different domains of the 23S rRNA in the assembled 50S subunit and ribosome. Forms part of the polypeptide exit tunnel. This Moorella thermoacetica (strain ATCC 39073 / JCM 9320) protein is Large ribosomal subunit protein uL4.